A 552-amino-acid chain; its full sequence is Solute carrier family 22 member 6-B (552 aa).

At 1 to 16 (MAFQEILESLGGMGRY) the chain is on the cytoplasmic side. Residues 17–37 (QVIHVVLLSLPVFMLASHNLM) traverse the membrane as a helical segment. Residues 38 to 137 (QNFTAATPSH…LVCNHRRMRQ (100 aa)) are Extracellular-facing. Residues 138–158 (VAQSIYMAGVLVGSILFGGLS) traverse the membrane as a helical segment. The Cytoplasmic portion of the chain corresponds to 159 to 164 (DKFGRR). The helical transmembrane segment at 165 to 184 (PLNIWSNLQMFVTGICAAFS) threads the bilayer. A topological domain (extracellular) is located at residue proline 185. The chain crosses the membrane as a helical span at residues 186-206 (NYIWYCIFRFLTGVAFSGIVL). Over 207–225 (NSYSLTVEWIPTGNRAFTS) the chain is Cytoplasmic. A helical transmembrane segment spans residues 226-246 (TATGYCYTMGQLVLVGLAFII). Over 247–250 (RDWQ) the chain is Extracellular. A helical membrane pass occupies residues 251 to 271 (WLQLAASIPFFFYFLYSWWIP). The Cytoplasmic segment spans residues 272-336 (ESGRWLVLSG…YSALDLVRTP (65 aa)). Residues 337–356 (VVRRISFCISCTWFSTSFAY) form a helical membrane-spanning segment. Residue tyrosine 357 is a topological domain, extracellular. The chain crosses the membrane as a helical span at residues 358 to 378 (GLALDLQSFGVSIYIIQIIFG). Topologically, residues 379-398 (TVDIPAKFISYFITTYVGRR) are cytoplasmic. The chain crosses the membrane as a helical span at residues 399–419 (VSQAITLILAGIAILVNISVP). Residues 420–426 (QDFQTVR) are Extracellular-facing. A helical transmembrane segment spans residues 427–447 (TAMAVFGKGCLAASFNCLYLY). Residues 448-459 (TGELYPTVIRQT) are Cytoplasmic-facing. Residues 460–480 (GMGLGAMMARLGGIIAPLAQM) form a helical membrane-spanning segment. Residues 481–487 (TGDIYHS) are Extracellular-facing. The chain crosses the membrane as a helical span at residues 488–508 (LPLIIFGCLPILSGIAGCFLP). Residues 509–552 (ETLGVPLPETIEEVESPDKQQKDVNVSAKIPLKETELYNMKTDV) are Cytoplasmic-facing.

The protein belongs to the major facilitator (TC 2.A.1) superfamily. Organic cation transporter (TC 2.A.1.19) family. Glycosylated. Glycosylation is necessary for proper targeting of the transporter to the plasma membrane.

Its subcellular location is the cell membrane. The protein localises to the basolateral cell membrane. The protein resides in the basal cell membrane. Functionally, involved in the renal elimination of endogenous and exogenous organic anions. Mediates the sodium-independent uptake of p-aminohippurate (PAH), cidofovir, adefovir, 9-(2-phosphonylmethoxyethyl) guanine (PMEG), 9-(2-phosphonylmethoxyethyl) diaminopurine (PMEDAP) and edaravone sulfate. PAH uptake is inhibited by furosemide, steviol, phorbol 12-myristate 13-acetate (PMA), calcium ionophore A23187, benzylpenicillin, furosemide, indomethacin, bumetamide, losartan, probenecid, phenol red, urate, and alpha-ketoglutarate. The polypeptide is Solute carrier family 22 member 6-B (slc22a6-b) (Xenopus laevis (African clawed frog)).